A 432-amino-acid polypeptide reads, in one-letter code: 3-phosphoshikimate 1-carboxyvinyltransferase (432 aa).

The 3-phosphoshikimate site is built by K22, S23, and R27. Residue K22 participates in phosphoenolpyruvate binding. Positions 96 and 127 each coordinate phosphoenolpyruvate. 7 residues coordinate 3-phosphoshikimate: S173, S174, Q175, S201, D316, N339, and K343. Q175 contacts phosphoenolpyruvate. The Proton acceptor role is filled by D316. R347, R391, and K416 together coordinate phosphoenolpyruvate.

This sequence belongs to the EPSP synthase family. As to quaternary structure, monomer.

It localises to the cytoplasm. The catalysed reaction is 3-phosphoshikimate + phosphoenolpyruvate = 5-O-(1-carboxyvinyl)-3-phosphoshikimate + phosphate. It functions in the pathway metabolic intermediate biosynthesis; chorismate biosynthesis; chorismate from D-erythrose 4-phosphate and phosphoenolpyruvate: step 6/7. Its function is as follows. Catalyzes the transfer of the enolpyruvyl moiety of phosphoenolpyruvate (PEP) to the 5-hydroxyl of shikimate-3-phosphate (S3P) to produce enolpyruvyl shikimate-3-phosphate and inorganic phosphate. The polypeptide is 3-phosphoshikimate 1-carboxyvinyltransferase (Haemophilus influenzae (strain ATCC 51907 / DSM 11121 / KW20 / Rd)).